Here is a 539-residue protein sequence, read N- to C-terminus: MSVKGITPQELAAYGIHNVSEIVYNPSYDLLFQEETKPTLEGYERGTLTNTGAIAVDTGIFTGRSPKDKYIVRDAITQDTVWWADQGKGKNDNKPLSQETWTHLKGLVTNQLSGKRLFVVDTFCGANADTRLQVRFVTEVAWQAHFVKNMFIRPTDEELAHFEPDFIVMNGAKCINPNWKEQGLNSENFVAFNLTERMQLIGGTWYGGEMKKGMFSMMNYLLPLKGIASMHCSANVGEKGDVAIFFGLSGTGKTTLSTDPKRKLIGDDEHGWDDDGVFNFEGGCYAKTIKLSEEAEPDIYHAIKRDALLENVVVLPDGTVDFNDGSKTENTRVSYPIYHIENIVKPVSKAGHATKVIFLTADAFGVLPPVSRLTANQTQYHFLSGFTAKLAGTERGVTEPTPTFSACFGAAFLSLHPTQYAEVLVKRMQAVGAQAYLVNTGWNGTGKRISIKDTRAIIDAILNGEIDKAETFTLPIFDLAVPMALPGVDPAILDPRDTYADVAQWQEKAEDLAKRFTTNFDKYTDTPAGAALVSAGPKI.

Substrate is bound by residues R64, Y206, and K212. ATP is bound by residues K212, H231, and 247-255 (GLSGTGKTT). Mn(2+)-binding residues include K212 and H231. Mn(2+) is bound at residue D268. ATP contacts are provided by residues E296, R332, 448-449 (RI), and T454. R332 is a binding site for substrate.

It belongs to the phosphoenolpyruvate carboxykinase (ATP) family. In terms of assembly, monomer. The cofactor is Mn(2+).

The protein localises to the cytoplasm. The enzyme catalyses oxaloacetate + ATP = phosphoenolpyruvate + ADP + CO2. The protein operates within carbohydrate biosynthesis; gluconeogenesis. Its function is as follows. Involved in the gluconeogenesis. Catalyzes the conversion of oxaloacetate (OAA) to phosphoenolpyruvate (PEP) through direct phosphoryl transfer between the nucleoside triphosphate and OAA. This Yersinia enterocolitica serotype O:8 / biotype 1B (strain NCTC 13174 / 8081) protein is Phosphoenolpyruvate carboxykinase (ATP).